Reading from the N-terminus, the 280-residue chain is Ribosomal RNA small subunit methyltransferase A (280 aa).

Positions 28, 30, 55, 77, 103, and 122 each coordinate S-adenosyl-L-methionine.

Belongs to the class I-like SAM-binding methyltransferase superfamily. rRNA adenine N(6)-methyltransferase family. RsmA subfamily.

Its subcellular location is the cytoplasm. The catalysed reaction is adenosine(1518)/adenosine(1519) in 16S rRNA + 4 S-adenosyl-L-methionine = N(6)-dimethyladenosine(1518)/N(6)-dimethyladenosine(1519) in 16S rRNA + 4 S-adenosyl-L-homocysteine + 4 H(+). Functionally, specifically dimethylates two adjacent adenosines (A1518 and A1519) in the loop of a conserved hairpin near the 3'-end of 16S rRNA in the 30S particle. May play a critical role in biogenesis of 30S subunits. The chain is Ribosomal RNA small subunit methyltransferase A from Dinoroseobacter shibae (strain DSM 16493 / NCIMB 14021 / DFL 12).